The primary structure comprises 608 residues: uncharacterized protein (608 aa).

The tract at residues 1-21 (MHTNSPLRADNQDLETQPLLR) is disordered. T24 bears the Phosphothreonine mark. Residue S27 is modified to Phosphoserine. A helical transmembrane segment spans residues 55–75 (IIYLLGIVLLSFFGVSIVQYI). Residues N115, N141, N169, N407, N425, N449, N453, N527, and N580 are each glycosylated (N-linked (GlcNAc...) asparagine).

The protein localises to the membrane. This is an uncharacterized protein from Saccharomyces cerevisiae (strain ATCC 204508 / S288c) (Baker's yeast).